The chain runs to 442 residues: Endothelin receptor type B (442 aa).

Positions 1-26 (MQPPPSLCGRALVALVLACGLSRIWG) are cleaved as a signal peptide. Residues 27–101 (EERGFPPDRA…GSIEIKETFK (75 aa)) lie on the Extracellular side of the membrane. Asn59 is a glycosylation site (N-linked (GlcNAc...) asparagine). Positions 69-88 (AEVPKGDRTAGSPPRTISPP) are disordered. Residues 102–126 (YINTVVSCLVFVLGIIGNSTLLRII) form a helical membrane-spanning segment. Residues 127–137 (YKNKCMRNGPN) are Cytoplasmic-facing. A helical transmembrane segment spans residues 138–163 (ILIASLALGDLLHIIIDIPITVYKLL). The Extracellular portion of the chain corresponds to 164 to 175 (AEDWPFGVEMCK). Residues Cys174 and Cys255 are joined by a disulfide bond. The helical transmembrane segment at 176–197 (LVPFIQKASVGITVLSLCALSI) threads the bilayer. Over 198 to 218 (DRYRAVASWSRIKGIGVPKWT) the chain is Cytoplasmic. A helical membrane pass occupies residues 219–243 (AVEIVLIWVVSVVLAVPEAVGFDMI). Residues 244 to 271 (TIDYKGRYLRICLLHPTQKTAFMQFYKT) are Extracellular-facing. Residues 272–296 (AKDWWLFSFYFCLPLAITAFFYTLM) form a helical membrane-spanning segment. The Cytoplasmic segment spans residues 297–324 (TCEMLRKKSGMQIALNDHLKQRREVAKT). Ser305 carries the post-translational modification Phosphoserine. A helical transmembrane segment spans residues 325–350 (VFCLVLVFALCWLPLHLSRILKLTIY). Over 351-362 (DQNDPNRCELLS) the chain is Extracellular. The helical transmembrane segment at 363–389 (FLLVLDYIGINMASLNSCINPIALYLV) threads the bilayer. The Cytoplasmic segment spans residues 390–442 (SKRFKNCFKSCLCCWCQSFEEKQSLEEKQSCLKFKANDHGYDNFRSSNKYSSS). S-palmitoyl cysteine attachment occurs at residues Cys402, Cys403, and Cys405. Ser419 carries the phosphoserine modification. A Phosphotyrosine modification is found at Tyr439. Phosphoserine occurs at positions 440, 441, and 442.

It belongs to the G-protein coupled receptor 1 family. Endothelin receptor subfamily. EDNRB sub-subfamily.

It localises to the cell membrane. Its function is as follows. Non-specific receptor for endothelin 1, 2, and 3. Mediates its action by association with G proteins that activate a phosphatidylinositol-calcium second messenger system. The sequence is that of Endothelin receptor type B (EDNRB) from Canis lupus familiaris (Dog).